The primary structure comprises 465 residues: UDP-N-acetylmuramoylalanine--D-glutamate ligase (465 aa).

ATP is bound at residue 127–133 (GSNGKST).

Belongs to the MurCDEF family.

The protein resides in the cytoplasm. It catalyses the reaction UDP-N-acetyl-alpha-D-muramoyl-L-alanine + D-glutamate + ATP = UDP-N-acetyl-alpha-D-muramoyl-L-alanyl-D-glutamate + ADP + phosphate + H(+). It participates in cell wall biogenesis; peptidoglycan biosynthesis. Cell wall formation. Catalyzes the addition of glutamate to the nucleotide precursor UDP-N-acetylmuramoyl-L-alanine (UMA). The chain is UDP-N-acetylmuramoylalanine--D-glutamate ligase from Cereibacter sphaeroides (strain ATCC 17025 / ATH 2.4.3) (Rhodobacter sphaeroides).